Reading from the N-terminus, the 257-residue chain is uncharacterized protein (257 aa).

A helical membrane pass occupies residues isoleucine 6–phenylalanine 26.

Belongs to the staphylococcal tandem lipoprotein family.

The protein resides in the cell membrane. This is an uncharacterized protein from Staphylococcus aureus (strain MSSA476).